We begin with the raw amino-acid sequence, 491 residues long: Glutamyl-tRNA(Gln) amidotransferase subunit A (491 aa).

Residues Lys-77 and Ser-152 each act as charge relay system in the active site. Catalysis depends on Ser-176, which acts as the Acyl-ester intermediate.

Belongs to the amidase family. GatA subfamily. As to quaternary structure, heterotrimer of A, B and C subunits.

The enzyme catalyses L-glutamyl-tRNA(Gln) + L-glutamine + ATP + H2O = L-glutaminyl-tRNA(Gln) + L-glutamate + ADP + phosphate + H(+). Allows the formation of correctly charged Gln-tRNA(Gln) through the transamidation of misacylated Glu-tRNA(Gln) in organisms which lack glutaminyl-tRNA synthetase. The reaction takes place in the presence of glutamine and ATP through an activated gamma-phospho-Glu-tRNA(Gln). The sequence is that of Glutamyl-tRNA(Gln) amidotransferase subunit A from Chlamydia abortus (strain DSM 27085 / S26/3) (Chlamydophila abortus).